The chain runs to 1023 residues: Sodium/potassium-transporting ATPase subunit alpha-1 (1023 aa).

The propeptide occupies Met1–Ala5. Residues Met1–Glu11 are compositionally biased toward basic and acidic residues. The segment at Met1 to Glu34 is disordered. At Gly6–Pro87 the chain is on the cytoplasmic side. Residue Thr15 is modified to Phosphothreonine; by PKC. The residue at position 16 (Ser16) is a Phosphoserine; by PKC. The segment at Pro82–Pro84 is interaction with phosphoinositide-3 kinase. A helical membrane pass occupies residues Glu88–Ala108. At Ile109 to Tyr131 the chain is on the extracellular side. Residues Leu132–Ala152 form a helical membrane-spanning segment. Residues Lys153 to Ile288 lie on the Cytoplasmic side of the membrane. The interval Asn215–Asn235 is disordered. A helical membrane pass occupies residues Gly289 to Ile308. Over Leu309 to Ala320 the chain is Extracellular. Residues Val321–Ala338 traverse the membrane as a helical segment. Residues Thr339–Leu772 lie on the Cytoplasmic side of the membrane. Asp376 (4-aspartylphosphate intermediate) is an active-site residue. Lys487 contacts ATP. Residues Asp717 and Asp721 each coordinate Mg(2+). The chain crosses the membrane as a helical span at residues Lys773–Ile792. At Phe793–Leu802 the chain is on the extracellular side. The chain crosses the membrane as a helical span at residues Gly803 to Ala823. The Cytoplasmic portion of the chain corresponds to Tyr824–Lys843. Residues Leu844–Phe866 form a helical membrane-spanning segment. The Extracellular segment spans residues Phe867–Cys918. The helical transmembrane segment at His919–Lys938 threads the bilayer. At Thr939–Asn951 the chain is on the cytoplasmic side. Ser943 is subject to Phosphoserine; by PKA. A helical membrane pass occupies residues Lys952 to Tyr970. Residues Cys971–Pro985 lie on the Extracellular side of the membrane. Residues Thr986–Lys1006 traverse the membrane as a helical segment. Over Leu1007–Tyr1023 the chain is Cytoplasmic.

It belongs to the cation transport ATPase (P-type) (TC 3.A.3) family. Type IIC subfamily. In terms of assembly, the sodium/potassium-transporting ATPase is composed of a catalytic alpha subunit, an auxiliary non-catalytic beta subunit and an additional regulatory subunit. As to expression, mainly expressed in kidney. Found in bladder, colon, eye, and testis. Found in low levels in brain, heart, spleen and liver.

The protein resides in the cell membrane. Its subcellular location is the sarcolemma. It catalyses the reaction K(+)(out) + Na(+)(in) + ATP + H2O = K(+)(in) + Na(+)(out) + ADP + phosphate + H(+). With respect to regulation, this alpha subunit is resistant to ouabain. In terms of biological role, this is the catalytic component of the active enzyme, which catalyzes the hydrolysis of ATP coupled with the exchange of sodium and potassium ions across the plasma membrane. This action creates the electrochemical gradient of sodium and potassium ions, providing the energy for active transport of various nutrients. The protein is Sodium/potassium-transporting ATPase subunit alpha-1 (ATP1A1) of Rhinella marina (Cane toad).